The sequence spans 201 residues: dCTP deaminase, dUMP-forming (201 aa).

DCTP-binding positions include Arg117–Arg122, Asp135, Thr143–Glu145, Gln163, Tyr177, and Gln188. The active-site Proton donor/acceptor is Glu145.

This sequence belongs to the dCTP deaminase family. Homotrimer.

The catalysed reaction is dCTP + 2 H2O = dUMP + NH4(+) + diphosphate. The protein operates within pyrimidine metabolism; dUMP biosynthesis; dUMP from dCTP: step 1/1. Functionally, bifunctional enzyme that catalyzes both the deamination of dCTP to dUTP and the hydrolysis of dUTP to dUMP without releasing the toxic dUTP intermediate. This chain is dCTP deaminase, dUMP-forming, found in Methanococcus aeolicus (strain ATCC BAA-1280 / DSM 17508 / OCM 812 / Nankai-3).